A 77-amino-acid chain; its full sequence is MASKNLFVLFFIFALFAANIAALQCPKNSEVRNSPCPRTCNDPYGQNSCITVIRETCHCKGELVFDSDSICVPISQC.

The first 22 residues, 1-22 (MASKNLFVLFFIFALFAANIAA), serve as a signal peptide directing secretion. 4 cysteine pairs are disulfide-bonded: cysteine 25-cysteine 57, cysteine 36-cysteine 49, cysteine 40-cysteine 77, and cysteine 59-cysteine 71.

Belongs to the protease inhibitor I40 family. Hemolymph.

It is found in the secreted. In terms of biological role, highly specific for fungal protease and subtilisin. The chain is Fungal protease inhibitor F from Bombyx mori (Silk moth).